The sequence spans 105 residues: MAEKMEKTGQILQMQLKRFSRVEKAFYFSIAVTTLIVAISIIFMQTKLLQVQNDLTKINAQIEEKKTELDDAKQEVNELLRAERLKEIANSHDLQLNNENIRIAE.

The Cytoplasmic portion of the chain corresponds to 1-24; the sequence is MAEKMEKTGQILQMQLKRFSRVEK. Residues 25-45 form a helical membrane-spanning segment; it reads AFYFSIAVTTLIVAISIIFMQ. Residues 46 to 105 are Extracellular-facing; sequence TKLLQVQNDLTKINAQIEEKKTELDDAKQEVNELLRAERLKEIANSHDLQLNNENIRIAE.

Belongs to the FtsL family.

It localises to the cell membrane. Functionally, essential cell division protein. The protein is Cell division protein FtsL of Streptococcus pneumoniae (strain ATCC BAA-255 / R6).